We begin with the raw amino-acid sequence, 103 residues long: MSQFNNVTLVKAANVYFDGKVSSRTVQFNDGSHKTLGLMLPGEYEFGTQAKELMEIMSGELQIMLPESHTWQSIVGPQSFEARESPDNCFYFQFSRHAWCYLI.

The protein belongs to the nucleoside phosphorylase PpnP family.

The catalysed reaction is a purine D-ribonucleoside + phosphate = a purine nucleobase + alpha-D-ribose 1-phosphate. The enzyme catalyses adenosine + phosphate = alpha-D-ribose 1-phosphate + adenine. It carries out the reaction cytidine + phosphate = cytosine + alpha-D-ribose 1-phosphate. It catalyses the reaction guanosine + phosphate = alpha-D-ribose 1-phosphate + guanine. The catalysed reaction is inosine + phosphate = alpha-D-ribose 1-phosphate + hypoxanthine. The enzyme catalyses thymidine + phosphate = 2-deoxy-alpha-D-ribose 1-phosphate + thymine. It carries out the reaction uridine + phosphate = alpha-D-ribose 1-phosphate + uracil. It catalyses the reaction xanthosine + phosphate = alpha-D-ribose 1-phosphate + xanthine. Its function is as follows. Catalyzes the phosphorolysis of diverse nucleosides, yielding D-ribose 1-phosphate and the respective free bases. Can use uridine, adenosine, guanosine, cytidine, thymidine, inosine and xanthosine as substrates. Also catalyzes the reverse reactions. This is Pyrimidine/purine nucleoside phosphorylase from Shewanella denitrificans (strain OS217 / ATCC BAA-1090 / DSM 15013).